The primary structure comprises 301 residues: Probable alpha-L-glutamate ligase (301 aa).

The ATP-grasp domain maps to 104–287 (LQLLSRRGIG…VAGMIIGYLE (184 aa)). Residues Lys141, 178–179 (EY), Asp187, and 211–213 (RSN) each bind ATP. 3 residues coordinate Mg(2+): Asp248, Glu260, and Asn262. Residues Asp248, Glu260, and Asn262 each contribute to the Mn(2+) site.

It belongs to the RimK family. Mg(2+) is required as a cofactor. Requires Mn(2+) as cofactor.

The chain is Probable alpha-L-glutamate ligase from Pseudomonas syringae pv. syringae (strain B728a).